The chain runs to 595 residues: Glutamyl-tRNA(Gln) amidotransferase subunit B, mitochondrial (595 aa).

A mitochondrion-targeting transit peptide spans 1-72; sequence MPRLWYSRYL…RAKSQSRNGR (72 aa).

It belongs to the GatB/GatE family. GatB subfamily. In terms of assembly, subunit of the heterotrimeric GatCAB amidotransferase (AdT) complex, composed of A, B and C subunits.

The protein resides in the mitochondrion. It carries out the reaction L-glutamyl-tRNA(Gln) + L-glutamine + ATP + H2O = L-glutaminyl-tRNA(Gln) + L-glutamate + ADP + phosphate + H(+). Its function is as follows. Allows the formation of correctly charged Gln-tRNA(Gln) through the transamidation of misacylated Glu-tRNA(Gln) in the mitochondria. The reaction takes place in the presence of glutamine and ATP through an activated gamma-phospho-Glu-tRNA(Gln). This chain is Glutamyl-tRNA(Gln) amidotransferase subunit B, mitochondrial, found in Talaromyces marneffei (strain ATCC 18224 / CBS 334.59 / QM 7333) (Penicillium marneffei).